Consider the following 166-residue polypeptide: Protein SprT (166 aa).

The SprT-like domain occupies 19-164; it reads REHLAKANLK…CVHCGDLLVA (146 aa). Histidine 78 contributes to the Zn(2+) binding site. Glutamate 79 is a catalytic residue. Histidine 82 is a binding site for Zn(2+).

It belongs to the SprT family. Requires Zn(2+) as cofactor.

It is found in the cytoplasm. The sequence is that of Protein SprT from Klebsiella pneumoniae (strain 342).